The sequence spans 189 residues: Elongation factor P (189 aa).

The protein belongs to the elongation factor P family.

It is found in the cytoplasm. Its pathway is protein biosynthesis; polypeptide chain elongation. Its function is as follows. Involved in peptide bond synthesis. Stimulates efficient translation and peptide-bond synthesis on native or reconstituted 70S ribosomes in vitro. Probably functions indirectly by altering the affinity of the ribosome for aminoacyl-tRNA, thus increasing their reactivity as acceptors for peptidyl transferase. This chain is Elongation factor P, found in Pseudomonas syringae pv. syringae (strain B728a).